The primary structure comprises 424 residues: Glutamate-1-semialdehyde 2,1-aminomutase (424 aa).

The residue at position 263 (Lys-263) is an N6-(pyridoxal phosphate)lysine.

The protein belongs to the class-III pyridoxal-phosphate-dependent aminotransferase family. HemL subfamily. As to quaternary structure, homodimer. Pyridoxal 5'-phosphate is required as a cofactor.

The protein localises to the cytoplasm. The enzyme catalyses (S)-4-amino-5-oxopentanoate = 5-aminolevulinate. Its pathway is porphyrin-containing compound metabolism; protoporphyrin-IX biosynthesis; 5-aminolevulinate from L-glutamyl-tRNA(Glu): step 2/2. This is Glutamate-1-semialdehyde 2,1-aminomutase from Campylobacter jejuni subsp. jejuni serotype O:6 (strain 81116 / NCTC 11828).